A 245-amino-acid polypeptide reads, in one-letter code: DNA repair protein RecO (245 aa).

It belongs to the RecO family.

Its function is as follows. Involved in DNA repair and RecF pathway recombination. This chain is DNA repair protein RecO, found in Erwinia tasmaniensis (strain DSM 17950 / CFBP 7177 / CIP 109463 / NCPPB 4357 / Et1/99).